The chain runs to 27 residues: Cupiennin-4a (27 aa).

E27 carries the post-translational modification Glutamic acid 1-amide.

In terms of tissue distribution, expressed by the venom gland.

It is found in the secreted. In Cupiennius salei (American wandering spider), this protein is Cupiennin-4a.